The chain runs to 105 residues: Small ribosomal subunit protein uS10 (105 aa).

The protein belongs to the universal ribosomal protein uS10 family. Part of the 30S ribosomal subunit.

Functionally, involved in the binding of tRNA to the ribosomes. This Rickettsia akari (strain Hartford) protein is Small ribosomal subunit protein uS10.